Here is a 284-residue protein sequence, read N- to C-terminus: D-tagatose-1,6-bisphosphate aldolase subunit GatY (284 aa).

Catalysis depends on Asp-82, which acts as the Proton donor. Zn(2+) contacts are provided by His-83 and His-180. Gly-181 is a binding site for dihydroxyacetone phosphate. Position 208 (His-208) interacts with Zn(2+). Residues Gly-209–Ser-211 and Asn-230–Thr-233 contribute to the dihydroxyacetone phosphate site.

This sequence belongs to the class II fructose-bisphosphate aldolase family. TagBP aldolase GatY subfamily. As to quaternary structure, forms a complex with GatZ. It depends on Zn(2+) as a cofactor.

The catalysed reaction is D-tagatofuranose 1,6-bisphosphate = D-glyceraldehyde 3-phosphate + dihydroxyacetone phosphate. It functions in the pathway carbohydrate metabolism; D-tagatose 6-phosphate degradation; D-glyceraldehyde 3-phosphate and glycerone phosphate from D-tagatose 6-phosphate: step 2/2. Catalytic subunit of the tagatose-1,6-bisphosphate aldolase GatYZ, which catalyzes the reversible aldol condensation of dihydroxyacetone phosphate (DHAP or glycerone-phosphate) with glyceraldehyde 3-phosphate (G3P) to produce tagatose 1,6-bisphosphate (TBP). Requires GatZ subunit for full activity and stability. Is involved in the catabolism of galactitol. The polypeptide is D-tagatose-1,6-bisphosphate aldolase subunit GatY (Escherichia coli O8 (strain IAI1)).